We begin with the raw amino-acid sequence, 492 residues long: Protein nucleotidyltransferase YdiU (492 aa).

Positions 88, 90, 91, 111, 123, 124, 174, and 181 each coordinate ATP. The active-site Proton acceptor is Asp-250. Mg(2+)-binding residues include Asn-251 and Asp-260. Asp-260 serves as a coordination point for ATP.

Belongs to the SELO family. Requires Mg(2+) as cofactor. Mn(2+) serves as cofactor.

It catalyses the reaction L-seryl-[protein] + ATP = 3-O-(5'-adenylyl)-L-seryl-[protein] + diphosphate. It carries out the reaction L-threonyl-[protein] + ATP = 3-O-(5'-adenylyl)-L-threonyl-[protein] + diphosphate. The catalysed reaction is L-tyrosyl-[protein] + ATP = O-(5'-adenylyl)-L-tyrosyl-[protein] + diphosphate. The enzyme catalyses L-histidyl-[protein] + UTP = N(tele)-(5'-uridylyl)-L-histidyl-[protein] + diphosphate. It catalyses the reaction L-seryl-[protein] + UTP = O-(5'-uridylyl)-L-seryl-[protein] + diphosphate. It carries out the reaction L-tyrosyl-[protein] + UTP = O-(5'-uridylyl)-L-tyrosyl-[protein] + diphosphate. Nucleotidyltransferase involved in the post-translational modification of proteins. It can catalyze the addition of adenosine monophosphate (AMP) or uridine monophosphate (UMP) to a protein, resulting in modifications known as AMPylation and UMPylation. The sequence is that of Protein nucleotidyltransferase YdiU from Rhodopseudomonas palustris (strain BisB5).